The chain runs to 959 residues: E3 ubiquitin-protein ligase NEDD4-like (959 aa).

Positions 10 to 130 constitute a C2 domain; that stretch reads PWHGVCVPVC…TEDPTMERPY (121 aa). Disordered regions lie at residues 183–206, 248–275, and 289–316; these read SNDSASQHQEELPPPPLPPGWEEK, AAHRRFRSRRHISEDLEPEPSEGGDVPE, and DSLGLALPPPPASPGSRTSPQELSEELS. One can recognise a WW 1 domain in the interval 197–230; that stretch reads PPLPPGWEEKVDNLGRTYYVNHNNRTTQWHRPSL. Residue serine 316 is modified to Phosphoserine. Threonine 322 is subject to Phosphothreonine. A Phosphoserine; by WNK1 and WNK4 modification is found at serine 346. The WW 2 domain occupies 369 to 402; it reads PGLPSGWEERKDAKGRTYYVNHNNRTTTWTRPIM. The interval 408–478 is disordered; sequence GASGSATNSN…YNSPKPQHKV (71 aa). Position 430 is a phosphoserine (serine 430). Serine 432 bears the Phosphoserine; by SGK1 mark. Serine 433 is modified (phosphoserine; by WNK1 and WNK4). Over residues 444–455 the composition is skewed to basic and acidic residues; sequence GAKDSPVRRAVK. Serine 448 carries the post-translational modification Phosphoserine; by SGK1. Residues serine 459, serine 463, serine 467, and serine 471 each carry the phosphoserine modification. 2 WW domains span residues 481-514 and 532-565; these read SFLPPGWEMRIAPNGRPFFIDHNTKTTTWEDPRL and GPLPPGWEERIHLDGRTFYIDHNSKITQWEDPRL. One can recognise an HECT domain in the interval 624-958; it reads RPDVLKARLW…VENAQGFEGV (335 aa). The active-site Glycyl thioester intermediate is cysteine 926.

As to quaternary structure, interacts with UBE2E3. Interacts with NDFIP1; this interaction activates the E3 ubiquitin-protein ligase. Interacts with NDFIP2; this interaction activates the E3 ubiquitin-protein ligase. Interacts (via WW domains) with SCN1A. Interacts (via WW domains) with SCN2A. Interacts (via WW domains) with SCN3A. Interacts (via WW domains) with SCN5A. Interacts (via WW domains) with SCN8A. Interacts (via WW domains) with SCN9A. Interacts (via WW domains) with SCN10A. Interacts (via WW domains) with CLCN5. Interacts with SMAD2. Interacts with SMAD3. Interacts with SMAD6. Interacts with SMAD7. The phosphorylated form interacts with 14-3-3 proteins. Interacts with TNK2. Interacts with WNK1. Interacts with SGK1. Interacts (via C2 domain) with NPC2. Interacts with ARRDC4. Interacts with KCNQ1; promotes internalization of KCNQ1. Interacts (via domains WW1, 3 and 4) with USP36; the interaction inhibits ubiquitination of, at least, NTRK1, KCNQ2 and KCNQ3 by NEDD4L. Interacts with PRRG4 (via cytoplasmic domain). Interacts with LDLRAD3; the interaction is direct. Interacts with TTYH2 and TTYH3. Phosphorylated; which impairs interaction with SCNN. Interaction with YWHAH inhibits dephosphorylation. Post-translationally, auto-ubiquitinated.

It localises to the cytoplasm. It is found in the golgi apparatus. The protein localises to the endosome. Its subcellular location is the multivesicular body. The catalysed reaction is S-ubiquitinyl-[E2 ubiquitin-conjugating enzyme]-L-cysteine + [acceptor protein]-L-lysine = [E2 ubiquitin-conjugating enzyme]-L-cysteine + N(6)-ubiquitinyl-[acceptor protein]-L-lysine.. Its pathway is protein modification; protein ubiquitination. Its activity is regulated as follows. Activated by NDFIP1- and NDFIP2-binding. In terms of biological role, E3 ubiquitin-protein ligase which accepts ubiquitin from an E2 ubiquitin-conjugating enzyme in the form of a thioester and then directly transfers the ubiquitin to targeted substrates. Inhibits TGF-beta signaling by triggering SMAD2 and TGFBR1 ubiquitination and proteasome-dependent degradation. Promotes ubiquitination and internalization of various plasma membrane channels such as ENaC, Nav1.2, Nav1.3, Nav1.5, Nav1.7, Nav1.8, Kv1.3, KCNH2, EAAT1 or CLC5. Promotes ubiquitination and degradation of SGK1 and TNK2. Ubiquitinates BRAT1 and this ubiquitination is enhanced in the presence of NDFIP1. Plays a role in dendrite formation by melanocytes. Involved in the regulation of TOR signaling. Ubiquitinates TTYH2 and TTYH3 and regulates protein levels of TTYH2. This chain is E3 ubiquitin-protein ligase NEDD4-like (NEDD4L), found in Pongo abelii (Sumatran orangutan).